We begin with the raw amino-acid sequence, 771 residues long: Semaphorin-3A (771 aa).

Residues 1-20 (MGWLTRIVCLFWGVLLTARA) form the signal peptide. The Sema domain occupies 31 to 514 (RLKLSYKEML…STAGVAQLPL (484 aa)). An N-linked (GlcNAc...) asparagine glycan is attached at Asn53. A disulfide bond links Cys103 and Cys114. N-linked (GlcNAc...) asparagine glycosylation is present at Asn125. Intrachain disulfides connect Cys132–Cys141, Cys269–Cys381, Cys293–Cys341, and Cys517–Cys535. In terms of domain architecture, Ig-like C2-type spans 580-664 (PEERIIYGVE…GFIQTLLKVT (85 aa)). N-linked (GlcNAc...) asparagine glycosylation is present at Asn590. Cys649 and Cys722 are joined by a disulfide. The span at 728-737 (RDRKQRRQRP) shows a compositional bias: basic residues. The interval 728-771 (RDRKQRRQRPGHTPGNSNKWKHLQENKKGRNRRTHEFERAPRSV) is disordered. Residues 749-771 (HLQENKKGRNRRTHEFERAPRSV) are compositionally biased toward basic and acidic residues.

It belongs to the semaphorin family. In terms of assembly, interacts with PLXND1. As to expression, expressed in the dorsal root ganglia.

It localises to the secreted. Its function is as follows. Involved in the development of the olfactory system and in neuronal control of puberty. Induces the collapse and paralysis of neuronal growth cones. Could serve as a ligand that guides specific growth cones by a motility-inhibiting mechanism. Binds to the complex neuropilin-1/plexin-1. The chain is Semaphorin-3A (SEMA3A) from Homo sapiens (Human).